An 86-amino-acid polypeptide reads, in one-letter code: Anti-adapter protein IraP (86 aa).

Positions 1 to 36 (MKNLIAELLFKLAQKEEESKELCAQVEALEIIVTAM) form a coiled coil.

It belongs to the IraP family. As to quaternary structure, interacts with RssB.

The protein resides in the cytoplasm. Its function is as follows. Inhibits RpoS proteolysis by regulating RssB activity, thereby increasing the stability of the sigma stress factor RpoS especially during phosphate starvation, but also in stationary phase and during nitrogen starvation. Its effect on RpoS stability is due to its interaction with RssB, which probably blocks the interaction of RssB with RpoS, and the consequent delivery of the RssB-RpoS complex to the ClpXP protein degradation pathway. The polypeptide is Anti-adapter protein IraP (Shigella sonnei (strain Ss046)).